Reading from the N-terminus, the 483-residue chain is PAT complex subunit CCDC47 (483 aa).

An N-terminal signal peptide occupies residues 1–20 (MKAFHTFCVVLLVFGSVSEA). Residues 21–135 (KFDDFEDEED…PAHLQNSWES (115 aa)) lie on the Cytoplasmic side of the membrane. Residues 46–118 (MEDSVTESPQ…PDTSSSKNKD (73 aa)) are disordered. The segment covering 60-104 (TEDDEDETTVELEGQDENQEGDFEDADTQEGDTESEPYDDEEFEG) has biased composition (acidic residues). Basic and acidic residues predominate over residues 105-118 (YEDKPDTSSSKNKD). Residues 136 to 155 (YYLEILMVTGLLAYIMNYII) form a helical membrane-spanning segment. At 156–483 (GKNKNSRLAQ…KMKQIKVKAM (328 aa)) the chain is on the lumenal side. Residue Asn-178 is glycosylated (N-linked (GlcNAc...) asparagine). Residues 424–483 (QRQEAAQSRREEKKRAEKERIMNEEDPEKQRRLEEAALRREQKKLEKKQMKMKQIKVKAM) form a disordered region. Residues 430–472 (QSRREEKKRAEKERIMNEEDPEKQRRLEEAALRREQKKLEKKQ) show a composition bias toward basic and acidic residues. A coiled-coil region spans residues 450–483 (PEKQRRLEEAALRREQKKLEKKQMKMKQIKVKAM). A compositionally biased stretch (basic residues) spans 473-483 (MKMKQIKVKAM).

This sequence belongs to the CCDC47 family. In terms of assembly, component of the PAT complex, composed of WDR83OS/Asterix and CCDC47. The PAT complex is part of the multi-pass translocon (MPT) complex, composed of three subcomplexes, the GEL complex (composed of RAB5IF/OPTI and TMCO1), the BOS complex (composed of NCLN/Nicalin, NOMO and TMEM147) and the PAT complex (composed of WDR83OS/Asterix and CCDC47). The MPT complex associates with the SEC61 complex. Interacts with VCP, HSPA5, DERL1, DERL2 and SELENOS.

The protein localises to the endoplasmic reticulum membrane. The protein resides in the rough endoplasmic reticulum membrane. Component of the multi-pass translocon (MPT) complex that mediates insertion of multi-pass membrane proteins into the lipid bilayer of membranes. The MPT complex takes over after the SEC61 complex: following membrane insertion of the first few transmembrane segments of proteins by the SEC61 complex, the MPT complex occludes the lateral gate of the SEC61 complex to promote insertion of subsequent transmembrane regions. Within the MPT complex, the PAT subcomplex sequesters any highly polar regions in the transmembrane domains away from the non-polar membrane environment until they can be buried in the interior of the fully assembled protein. Within the PAT subcomplex, CCDC47 occludes the lateral gate of the SEC61 complex. Involved in the regulation of calcium ion homeostasis in the ER. Required for proper protein degradation via the ERAD (ER-associated degradation) pathway. Has an essential role in the maintenance of ER organization during embryogenesis. This chain is PAT complex subunit CCDC47, found in Homo sapiens (Human).